Consider the following 247-residue polypeptide: Ubiquinone biosynthesis O-methyltransferase (247 aa).

Residues Arg-39, Gly-70, Asp-91, and Met-134 each contribute to the S-adenosyl-L-methionine site.

The protein belongs to the methyltransferase superfamily. UbiG/COQ3 family.

It catalyses the reaction a 3-demethylubiquinol + S-adenosyl-L-methionine = a ubiquinol + S-adenosyl-L-homocysteine + H(+). The catalysed reaction is a 3-(all-trans-polyprenyl)benzene-1,2-diol + S-adenosyl-L-methionine = a 2-methoxy-6-(all-trans-polyprenyl)phenol + S-adenosyl-L-homocysteine + H(+). It participates in cofactor biosynthesis; ubiquinone biosynthesis. Functionally, O-methyltransferase that catalyzes the 2 O-methylation steps in the ubiquinone biosynthetic pathway. The protein is Ubiquinone biosynthesis O-methyltransferase of Cereibacter sphaeroides (strain ATCC 17023 / DSM 158 / JCM 6121 / CCUG 31486 / LMG 2827 / NBRC 12203 / NCIMB 8253 / ATH 2.4.1.) (Rhodobacter sphaeroides).